Here is a 555-residue protein sequence, read N- to C-terminus: Glucose-6-phosphate isomerase (555 aa).

Residue Glu-365 is the Proton donor of the active site. Residues His-396 and Lys-522 contribute to the active site.

Belongs to the GPI family.

The protein localises to the cytoplasm. It carries out the reaction alpha-D-glucose 6-phosphate = beta-D-fructose 6-phosphate. Its pathway is carbohydrate biosynthesis; gluconeogenesis. It functions in the pathway carbohydrate degradation; glycolysis; D-glyceraldehyde 3-phosphate and glycerone phosphate from D-glucose: step 2/4. Its function is as follows. Catalyzes the reversible isomerization of glucose-6-phosphate to fructose-6-phosphate. The protein is Glucose-6-phosphate isomerase of Psychrobacter cryohalolentis (strain ATCC BAA-1226 / DSM 17306 / VKM B-2378 / K5).